The chain runs to 245 residues: Orotidine 5'-phosphate decarboxylase (245 aa).

Residues D22, K44, 71–80 (DLKFHDIPNT), T131, R192, Q201, G221, and R222 contribute to the substrate site. The active-site Proton donor is K73.

Belongs to the OMP decarboxylase family. Type 1 subfamily. Homodimer.

It catalyses the reaction orotidine 5'-phosphate + H(+) = UMP + CO2. It functions in the pathway pyrimidine metabolism; UMP biosynthesis via de novo pathway; UMP from orotate: step 2/2. Catalyzes the decarboxylation of orotidine 5'-monophosphate (OMP) to uridine 5'-monophosphate (UMP). This Salmonella typhi protein is Orotidine 5'-phosphate decarboxylase.